A 264-amino-acid polypeptide reads, in one-letter code: S-adenosylmethionine decarboxylase proenzyme (264 aa).

Residue Ser113 is the Schiff-base intermediate with substrate; via pyruvic acid of the active site. Ser113 is modified (pyruvic acid (Ser); by autocatalysis). Catalysis depends on His118, which acts as the Proton acceptor; for processing activity. Cys141 (proton donor; for catalytic activity) is an active-site residue.

It belongs to the prokaryotic AdoMetDC family. Type 2 subfamily. Heterooctamer of four alpha and four beta chains arranged as a tetramer of alpha/beta heterodimers. Requires pyruvate as cofactor. In terms of processing, is synthesized initially as an inactive proenzyme. Formation of the active enzyme involves a self-maturation process in which the active site pyruvoyl group is generated from an internal serine residue via an autocatalytic post-translational modification. Two non-identical subunits are generated from the proenzyme in this reaction, and the pyruvate is formed at the N-terminus of the alpha chain, which is derived from the carboxyl end of the proenzyme. The post-translation cleavage follows an unusual pathway, termed non-hydrolytic serinolysis, in which the side chain hydroxyl group of the serine supplies its oxygen atom to form the C-terminus of the beta chain, while the remainder of the serine residue undergoes an oxidative deamination to produce ammonia and the pyruvoyl group blocking the N-terminus of the alpha chain.

It carries out the reaction S-adenosyl-L-methionine + H(+) = S-adenosyl 3-(methylsulfanyl)propylamine + CO2. It functions in the pathway amine and polyamine biosynthesis; S-adenosylmethioninamine biosynthesis; S-adenosylmethioninamine from S-adenosyl-L-methionine: step 1/1. Its function is as follows. Catalyzes the decarboxylation of S-adenosylmethionine to S-adenosylmethioninamine (dcAdoMet), the propylamine donor required for the synthesis of the polyamines spermine and spermidine from the diamine putrescine. This Hahella chejuensis (strain KCTC 2396) protein is S-adenosylmethionine decarboxylase proenzyme.